The chain runs to 222 residues: Deoxyribose-phosphate aldolase (222 aa).

Aspartate 89 serves as the catalytic Proton donor/acceptor. Catalysis depends on lysine 151, which acts as the Schiff-base intermediate with acetaldehyde. The active-site Proton donor/acceptor is lysine 180.

This sequence belongs to the DeoC/FbaB aldolase family. DeoC type 1 subfamily.

Its subcellular location is the cytoplasm. It catalyses the reaction 2-deoxy-D-ribose 5-phosphate = D-glyceraldehyde 3-phosphate + acetaldehyde. It functions in the pathway carbohydrate degradation; 2-deoxy-D-ribose 1-phosphate degradation; D-glyceraldehyde 3-phosphate and acetaldehyde from 2-deoxy-alpha-D-ribose 1-phosphate: step 2/2. In terms of biological role, catalyzes a reversible aldol reaction between acetaldehyde and D-glyceraldehyde 3-phosphate to generate 2-deoxy-D-ribose 5-phosphate. This is Deoxyribose-phosphate aldolase from Acholeplasma laidlawii (strain PG-8A).